Consider the following 315-residue polypeptide: Acyl transferase (315 aa).

Active-site charge relay system residues include S116, D213, and H243.

It belongs to the LuxD family.

The protein operates within lipid metabolism; fatty acid reduction for biolumincescence. Functionally, acyl transferase is part of the fatty acid reductase system required for aldehyde biosynthesis; it produces fatty acids for the luminescent reaction. The sequence is that of Acyl transferase from Photobacterium leiognathi.